The primary structure comprises 315 residues: tRNA dimethylallyltransferase (315 aa).

ATP is bound at residue 13–20 (GPTAVGKT). 15-20 (TAVGKT) is a substrate binding site. Positions 38 to 41 (DSRL) are interaction with substrate tRNA.

Belongs to the IPP transferase family. As to quaternary structure, monomer. The cofactor is Mg(2+).

It carries out the reaction adenosine(37) in tRNA + dimethylallyl diphosphate = N(6)-dimethylallyladenosine(37) in tRNA + diphosphate. Its function is as follows. Catalyzes the transfer of a dimethylallyl group onto the adenine at position 37 in tRNAs that read codons beginning with uridine, leading to the formation of N6-(dimethylallyl)adenosine (i(6)A). This is tRNA dimethylallyltransferase from Herpetosiphon aurantiacus (strain ATCC 23779 / DSM 785 / 114-95).